Here is a 427-residue protein sequence, read N- to C-terminus: Imidazolonepropionase (427 aa).

Fe(3+) is bound by residues His81 and His83. Positions 81 and 83 each coordinate Zn(2+). 4-imidazolone-5-propanoate-binding residues include Arg90, Tyr153, and His186. N-formimidoyl-L-glutamate is bound at residue Tyr153. His260 provides a ligand contact to Fe(3+). His260 contacts Zn(2+). Glu263 serves as a coordination point for 4-imidazolone-5-propanoate. Asp335 contacts Fe(3+). Asp335 serves as a coordination point for Zn(2+). N-formimidoyl-L-glutamate is bound by residues Asn337 and Gly339. Ser340 is a 4-imidazolone-5-propanoate binding site.

It belongs to the metallo-dependent hydrolases superfamily. HutI family. The cofactor is Zn(2+). It depends on Fe(3+) as a cofactor.

Its subcellular location is the cytoplasm. The enzyme catalyses 4-imidazolone-5-propanoate + H2O = N-formimidoyl-L-glutamate. The protein operates within amino-acid degradation; L-histidine degradation into L-glutamate; N-formimidoyl-L-glutamate from L-histidine: step 3/3. Catalyzes the hydrolytic cleavage of the carbon-nitrogen bond in imidazolone-5-propanoate to yield N-formimidoyl-L-glutamate. It is the third step in the universal histidine degradation pathway. This Chloroflexus aggregans (strain MD-66 / DSM 9485) protein is Imidazolonepropionase.